A 475-amino-acid polypeptide reads, in one-letter code: UDP-glycosyltransferase 84A4 (475 aa).

His20 serves as the catalytic Proton acceptor. Residue His20 participates in an anthocyanidin binding. The UDP-alpha-D-glucose site is built by Gln342, His357, Trp360, Asn361, Ser362, and Glu365. Gly380 contributes to the an anthocyanidin binding site. The UDP-alpha-D-glucose site is built by Asp381 and Gln382.

It belongs to the UDP-glycosyltransferase family.

The enzyme catalyses (E)-4-coumarate + UDP-alpha-D-glucose = 4-O-(beta-D-glucosyl)-trans-4-coumarate + UDP + H(+). It carries out the reaction (E)-ferulate + UDP-alpha-D-glucose = 1-O-[(E)-feruloyl]-beta-D-glucose + UDP. It catalyses the reaction (E)-caffeate + UDP-alpha-D-glucose = 1-O-[(E)-caffeoyl]-beta-D-glucose + UDP. The catalysed reaction is (E)-sinapate + UDP-alpha-D-glucose = 1-O-(trans-sinapoyl)-beta-D-glucose + UDP. The enzyme catalyses (E)-cinnamate + UDP-alpha-D-glucose = 1-O-(trans-cinnamoyl)-beta-D-glucose + UDP. Its function is as follows. UDP-glucosyltransferase that forms glucose esters with phenylpropanoids. Glucosylates 4-coumarate, ferulate, caffeate, sinapate and cinnamate. In Arabidopsis thaliana (Mouse-ear cress), this protein is UDP-glycosyltransferase 84A4.